A 52-amino-acid chain; its full sequence is uncharacterized protein (52 aa).

This is an uncharacterized protein from Halalkalibacterium halodurans (strain ATCC BAA-125 / DSM 18197 / FERM 7344 / JCM 9153 / C-125) (Bacillus halodurans).